Consider the following 1136-residue polypeptide: Nitric oxide synthase, inducible (1136 aa).

Zn(2+) contacts are provided by Cys-107 and Cys-112. Residue Cys-197 participates in heme b binding. The L-arginine site is built by Gln-260, Trp-369, Tyr-370, and Glu-374. (6R)-L-erythro-5,6,7,8-tetrahydrobiopterin is bound by residues Arg-378, Val-459, Trp-460, and Phe-473. Tyr-488 serves as a coordination point for heme b. A calmodulin-binding region spans residues 512–532 (LSILAKAVLLASLLLQKTMAA). The region spanning 536-674 (VTVIYATETG…AFRTWAVTAF (139 aa)) is the Flavodoxin-like domain. The FMN site is built by Thr-542, Glu-543, Thr-544, Lys-546, Ser-547, Ser-588, Thr-589, Ser-625, Cys-632, Glu-658, and Gln-662. One can recognise an FAD-binding FR-type domain in the interval 727–967 (KNVIPMKLKF…VRSADGFRLP (241 aa)). Arg-747 provides a ligand contact to NADP(+). FAD contacts are provided by His-769, Arg-903, Tyr-905, Ser-906, Thr-921, Ala-923, Tyr-927, Val-940, Cys-941, and Ser-942. Residues Thr-981, Arg-1014, Ser-1043, Arg-1044, Lys-1050, Tyr-1052, Gln-1054, and Asp-1087 each contribute to the NADP(+) site.

It belongs to the NOS family. In terms of assembly, homodimer. Heme b serves as cofactor. The cofactor is FAD. It depends on FMN as a cofactor. (6R)-L-erythro-5,6,7,8-tetrahydrobiopterin is required as a cofactor.

The protein resides in the cytoplasm. Its subcellular location is the cytosol. It catalyses the reaction 2 L-arginine + 3 NADPH + 4 O2 + H(+) = 2 L-citrulline + 2 nitric oxide + 3 NADP(+) + 4 H2O. With respect to regulation, not stimulated by calcium/calmodulin. Produces nitric oxide (NO) which is a messenger molecule with diverse functions throughout the body. NO may serve as both a paracrine and autocrine signal for modulating osteoclast bone resorption. Also has nitrosylase activity and mediates cysteine S-nitrosylation of cytoplasmic target proteins such COX2. The chain is Nitric oxide synthase, inducible (NOS2) from Gallus gallus (Chicken).